Consider the following 985-residue polypeptide: Alpha-glucosidase (985 aa).

The first 25 residues, 1 to 25 (MVKLTHLLARAWLVPLAYGASQSLL), serve as a signal peptide directing secretion. O-linked (Man) threonine glycosylation occurs at Thr36. N-linked (GlcNAc...) asparagine glycans are attached at residues Asn124, Asn143, Asn218, Asn347, and Asn422. Asp490 functions as the Nucleophile in the catalytic mechanism. Glu493 is a catalytic residue. 3 N-linked (GlcNAc...) asparagine glycosylation sites follow: Asn506, Asn534, and Asn537. O-linked (Man) serine glycans are attached at residues Ser545 and Ser550. The O-linked (Man) threonine glycan is linked to Thr559. Ser560 carries O-linked (Man) serine glycosylation. O-linked (Man) threonine glycosylation occurs at Thr561. An O-linked (Man) serine glycan is attached at Ser562. O-linked (Man) threonine glycosylation is present at Thr571. Residues Asn601 and Asn623 are each glycosylated (N-linked (GlcNAc...) asparagine). Residue Asp660 is the Proton donor of the active site. Asn835 and Asn881 each carry an N-linked (GlcNAc...) asparagine glycan. An O-linked (Man) serine glycan is attached at Ser895. Asn899, Asn957, and Asn970 each carry an N-linked (GlcNAc...) asparagine glycan.

This sequence belongs to the glycosyl hydrolase 31 family. Post-translationally, the O-linked saccharide is not identified, but is probably mannose.

The catalysed reaction is Hydrolysis of terminal, non-reducing (1-&gt;4)-linked alpha-D-glucose residues with release of alpha-D-glucose.. Functionally, hydrolyzes malto-oligosaccharides, but has a low activity toward soluble starch. The polypeptide is Alpha-glucosidase (aglA) (Aspergillus niger).